Reading from the N-terminus, the 364-residue chain is Nicotinate-nucleotide--dimethylbenzimidazole phosphoribosyltransferase (364 aa).

E332 functions as the Proton acceptor in the catalytic mechanism.

This sequence belongs to the CobT family.

It carries out the reaction 5,6-dimethylbenzimidazole + nicotinate beta-D-ribonucleotide = alpha-ribazole 5'-phosphate + nicotinate + H(+). It functions in the pathway nucleoside biosynthesis; alpha-ribazole biosynthesis; alpha-ribazole from 5,6-dimethylbenzimidazole: step 1/2. Functionally, catalyzes the synthesis of alpha-ribazole-5'-phosphate from nicotinate mononucleotide (NAMN) and 5,6-dimethylbenzimidazole (DMB). This Salinispora tropica (strain ATCC BAA-916 / DSM 44818 / JCM 13857 / NBRC 105044 / CNB-440) protein is Nicotinate-nucleotide--dimethylbenzimidazole phosphoribosyltransferase.